Reading from the N-terminus, the 210-residue chain is ATP phosphoribosyltransferase (210 aa).

It belongs to the ATP phosphoribosyltransferase family. Short subfamily. As to quaternary structure, heteromultimer composed of HisG and HisZ subunits.

It is found in the cytoplasm. The enzyme catalyses 1-(5-phospho-beta-D-ribosyl)-ATP + diphosphate = 5-phospho-alpha-D-ribose 1-diphosphate + ATP. Its pathway is amino-acid biosynthesis; L-histidine biosynthesis; L-histidine from 5-phospho-alpha-D-ribose 1-diphosphate: step 1/9. Catalyzes the condensation of ATP and 5-phosphoribose 1-diphosphate to form N'-(5'-phosphoribosyl)-ATP (PR-ATP). Has a crucial role in the pathway because the rate of histidine biosynthesis seems to be controlled primarily by regulation of HisG enzymatic activity. The sequence is that of ATP phosphoribosyltransferase from Petrotoga mobilis (strain DSM 10674 / SJ95).